The sequence spans 160 residues: Transcription elongation factor GreA (160 aa).

Positions 3–84 form a coiled coil; sequence SIVNDKILLT…SKAKIIKADL (82 aa).

This sequence belongs to the GreA/GreB family.

In terms of biological role, necessary for efficient RNA polymerase transcription elongation past template-encoded arresting sites. The arresting sites in DNA have the property of trapping a certain fraction of elongating RNA polymerases that pass through, resulting in locked ternary complexes. Cleavage of the nascent transcript by cleavage factors such as GreA or GreB allows the resumption of elongation from the new 3'terminus. GreA releases sequences of 2 to 3 nucleotides. The protein is Transcription elongation factor GreA of Mesomycoplasma hyopneumoniae (strain 7448) (Mycoplasma hyopneumoniae).